We begin with the raw amino-acid sequence, 154 residues long: Low molecular weight protein-tyrosine-phosphatase PtpA (154 aa).

Catalysis depends on C8, which acts as the Nucleophile. R14 is an active-site residue. D120 serves as the catalytic Proton donor.

The protein belongs to the low molecular weight phosphotyrosine protein phosphatase family. In terms of assembly, interacts with host CORO1A. Phosphorylations at Tyr-122 and Tyr-123 are essential for phosphatase activity.

Its subcellular location is the secreted. The catalysed reaction is O-phospho-L-tyrosyl-[protein] + H2O = L-tyrosyl-[protein] + phosphate. Functionally, secreted tyrosine phosphatase that plays a critical role during infection as a bacterial effector protein that counteracts host defenses. Required for intramacrophage survival. This chain is Low molecular weight protein-tyrosine-phosphatase PtpA (ptpA), found in Staphylococcus aureus (strain MRSA252).